A 513-amino-acid chain; its full sequence is MSYTQAFLRNFLGTSPNWYKITIVLFLIINPIIFFFISPFIAGWLLVAEFILTLAMALKCYPLQPGGLLALEAVAIGMTHPEHVKAEIIANFEVILLLIFMVAGIYFMKRLLLFVFTKLLLSIRSKMVLSLAFCLSAAFLSAFLDALTVVAVIISVGMGFYGVYHKVASGNNFNDSTDITKDDKIGENKDTLEQFRAFLRSLMMHSCVGTALGGVMTMVGEPQNLIIAEQAKWAFGEFFLRMLPVTLPVLICGLVTCFLVEKFGVFGYGAKLPRKVWGILAKFDRNNQQKMSQQDRLKLFVQALIGIWLVVGLAFHLAAVGIIGLTVIILATSFCGVTSEHAIGKAFQESLPFTALLVVFFSVVAVIIDQHLFAPIIQFVLAASEHTQLALFYIFNGLLSAISDNVFVATVYINETKAALEAGLIAQPQYELLAVAINTGTNLPSVATPNGQAAFLFLLTSSLAPLIRLSYGRMVYMALPYTIVLSCIGLLAVEYILPGATNVLIQIGLLKPM.

11 helical membrane-spanning segments follow: residues 21 to 41 (ITIVLFLIINPIIFFFISPFI), 88 to 108 (IIANFEVILLLIFMVAGIYFM), 119 to 139 (LLLSIRSKMVLSLAFCLSAAF), 143 to 163 (FLDALTVVAVIISVGMGFYGV), 208 to 228 (VGTALGGVMTMVGEPQNLIIA), 247 to 267 (LPVLICGLVTCFLVEKFGVFG), 303 to 323 (ALIGIWLVVGLAFHLAAVGII), 357 to 377 (LVVFFSVVAVIIDQHLFAPII), 389 to 409 (LALFYIFNGLLSAISDNVFVA), 447 to 467 (ATPNGQAAFLFLLTSSLAPLI), and 477 to 497 (MALPYTIVLSCIGLLAVEYIL).

This sequence belongs to the NhaB Na(+)/H(+) (TC 2.A.34) antiporter family.

It is found in the cell inner membrane. The catalysed reaction is 2 Na(+)(in) + 3 H(+)(out) = 2 Na(+)(out) + 3 H(+)(in). Its function is as follows. Na(+)/H(+) antiporter that extrudes sodium in exchange for external protons. The sequence is that of Na(+)/H(+) antiporter NhaB from Pasteurella multocida (strain Pm70).